We begin with the raw amino-acid sequence, 654 residues long: Periplasmic beta-glucosidase/beta-xylosidase (654 aa).

The N-terminal stretch at Met-1 to Ala-25 is a signal peptide. Active-site residues include Asp-235 and Asp-360.

Belongs to the glycosyl hydrolase 3 family.

The protein resides in the periplasm. The catalysed reaction is Hydrolysis of terminal, non-reducing beta-D-glucosyl residues with release of beta-D-glucose.. It carries out the reaction Hydrolysis of (1-&gt;4)-beta-D-xylans, to remove successive D-xylose residues from the non-reducing termini.. In terms of biological role, exhibits both beta-glucosidase and beta-xylosidase activities. The protein is Periplasmic beta-glucosidase/beta-xylosidase (bgxA) of Dickeya chrysanthemi (Pectobacterium chrysanthemi).